Here is a 548-residue protein sequence, read N- to C-terminus: MFS-type transporter TOXA (548 aa).

The span at 1-12 (MDEQIVSASSNV) shows a compositional bias: polar residues. Positions 1-33 (MDEQIVSASSNVKDGVEKQPVKDREDVDANVVP) are disordered. Positions 14 to 27 (DGVEKQPVKDREDV) are enriched in basic and acidic residues. 14 helical membrane-spanning segments follow: residues 43 to 63 (ISLI…FLGA), 85 to 105 (AVAW…PLFG), 114 to 134 (KWLF…CALA), 146 to 166 (VAGI…ALIV), 177 to 197 (MIGA…GAIA), 204 to 224 (WCFW…LFFF), 250 to 270 (IGAG…QWGG), 280 to 300 (VVAL…HQYW), 316 to 336 (GFLL…AALY), 357 to 377 (MLPI…TISF), 382 to 402 (APFI…LYTF), 411 to 431 (IIGY…QAFI), 444 to 464 (YASA…LCVC), and 518 to 538 (FLVA…LSWA).

The protein belongs to the major facilitator superfamily. TCR/Tet family.

The protein resides in the membrane. Its function is as follows. MFS-type transporter; part of the diffuse TOX2 gene cluster that mediates the biosynthesis of the HC-toxin, cyclic tetrapeptide of structure cyclo(D-Pro-L-Ala-D-Ala-L-Aeo), where Aeo stands for 2-amino-9,10-epoxi-8-oxodecanoic acid. HC-toxin is a determinant of specificity and virulence in the interaction between the producing fungus and its host, maize. TOXA acts as a HC-toxin efflux pump which contributes to self-protection against HC-toxin and/or the secretion of HC-toxin into the extracellular milieu. This Cochliobolus carbonum (Maize leaf spot fungus) protein is MFS-type transporter TOXA.